The primary structure comprises 160 residues: Sodium/proline symporter (160 aa).

The next 2 membrane-spanning stretches (helical) occupy residues 6–26 and 68–88; these read PMLV…FIAW and IFIS…GAWI.

The protein belongs to the sodium:solute symporter (SSF) (TC 2.A.21) family.

The protein localises to the cell inner membrane. The enzyme catalyses L-proline(in) + Na(+)(in) = L-proline(out) + Na(+)(out). Its function is as follows. Catalyzes the sodium-dependent uptake of extracellular L-proline. This chain is Sodium/proline symporter, found in Klebsiella oxytoca.